The primary structure comprises 1513 residues: DNA-directed RNA polymerase subunit beta'' (1513 aa).

Positions 220, 296, 303, and 306 each coordinate Zn(2+). Residues 644-769 (RTREKDSENE…EYGNPEEDSV (126 aa)) are disordered. Positions 659 to 679 (NEYRTREEECKTLEDEYRTRE) are enriched in basic and acidic residues. Positions 680–707 (EEYETLEDEYGIPENEYETLEDEYGILE) are enriched in acidic residues. The segment covering 726–737 (NKYRPREDKYGT) has biased composition (basic and acidic residues). Positions 738 to 767 (LEEDSEDEHGTLEEDSEEDSEDEYGNPEED) are enriched in acidic residues.

Belongs to the RNA polymerase beta' chain family. RpoC2 subfamily. In terms of assembly, in plastids the minimal PEP RNA polymerase catalytic core is composed of four subunits: alpha, beta, beta', and beta''. When a (nuclear-encoded) sigma factor is associated with the core the holoenzyme is formed, which can initiate transcription. The cofactor is Zn(2+).

The protein localises to the plastid. Its subcellular location is the chloroplast. The catalysed reaction is RNA(n) + a ribonucleoside 5'-triphosphate = RNA(n+1) + diphosphate. Its function is as follows. DNA-dependent RNA polymerase catalyzes the transcription of DNA into RNA using the four ribonucleoside triphosphates as substrates. This chain is DNA-directed RNA polymerase subunit beta'', found in Oryza sativa (Rice).